The following is a 397-amino-acid chain: 1-deoxy-D-xylulose 5-phosphate reductoisomerase (397 aa).

7 residues coordinate NADPH: Ser-10, Gly-11, Ser-12, Ile-13, Ala-36, Arg-37, and Asn-124. Position 125 (Lys-125) interacts with 1-deoxy-D-xylulose 5-phosphate. Glu-126 contacts NADPH. A Mn(2+)-binding site is contributed by Asp-150. Positions 151, 152, 186, and 209 each coordinate 1-deoxy-D-xylulose 5-phosphate. Glu-152 contacts Mn(2+). Residue Gly-215 coordinates NADPH. 4 residues coordinate 1-deoxy-D-xylulose 5-phosphate: Ser-222, Asn-227, Lys-228, and Glu-231. Glu-231 lines the Mn(2+) pocket.

The protein belongs to the DXR family. It depends on Mg(2+) as a cofactor. Mn(2+) is required as a cofactor.

It catalyses the reaction 2-C-methyl-D-erythritol 4-phosphate + NADP(+) = 1-deoxy-D-xylulose 5-phosphate + NADPH + H(+). The protein operates within isoprenoid biosynthesis; isopentenyl diphosphate biosynthesis via DXP pathway; isopentenyl diphosphate from 1-deoxy-D-xylulose 5-phosphate: step 1/6. Catalyzes the NADPH-dependent rearrangement and reduction of 1-deoxy-D-xylulose-5-phosphate (DXP) to 2-C-methyl-D-erythritol 4-phosphate (MEP). This is 1-deoxy-D-xylulose 5-phosphate reductoisomerase from Aeromonas salmonicida (strain A449).